The chain runs to 393 residues: MNVPARIKDLMIVNMGPQHPSMHGVLRLIVTLDGEDVVDCEPILGYLHRGMEKIAENRTIIQYLPYVTRWDYLATMFTEAITVNGPEQLGNIQVPKRASYIRVIMLELSRIASHLLWLGPFMADIGAQTPFFYIFRERELIYDLFEAATGMRMMHNYFRIGGVAADLPYGWIDKCFDFCNYFLTRVIEYQKLITRNPIFLERVEGVGVVGREEVLTWGLSGPMLRASGIQWDLRKVDNYECYDEFDWEVQWQKEGDSLARYLVRIGEMMESIKIIQQALEGIPGGPYENLEIRSFDREKEPEWNDFEYRFIGKKSSPTFELPKQELYVRVEAPKGELGIFLIGDHNGFPWRWKIRPPGFINLQILPQLVKRMKLADIMTILGSIDIIMGEVDR.

The protein belongs to the complex I 49 kDa subunit family. NDH is composed of at least 16 different subunits, 5 of which are encoded in the nucleus.

Its subcellular location is the plastid. It localises to the chloroplast thylakoid membrane. The catalysed reaction is a plastoquinone + NADH + (n+1) H(+)(in) = a plastoquinol + NAD(+) + n H(+)(out). The enzyme catalyses a plastoquinone + NADPH + (n+1) H(+)(in) = a plastoquinol + NADP(+) + n H(+)(out). Functionally, NDH shuttles electrons from NAD(P)H:plastoquinone, via FMN and iron-sulfur (Fe-S) centers, to quinones in the photosynthetic chain and possibly in a chloroplast respiratory chain. The immediate electron acceptor for the enzyme in this species is believed to be plastoquinone. Couples the redox reaction to proton translocation, and thus conserves the redox energy in a proton gradient. This is NAD(P)H-quinone oxidoreductase subunit H, chloroplastic from Trifolium subterraneum (Subterranean clover).